The primary structure comprises 187 residues: UPF0301 protein YqgE (187 aa).

The protein belongs to the UPF0301 (AlgH) family.

This is UPF0301 protein YqgE from Salmonella choleraesuis (strain SC-B67).